We begin with the raw amino-acid sequence, 152 residues long: Arginine repressor (152 aa).

Belongs to the ArgR family.

The protein localises to the cytoplasm. It functions in the pathway amino-acid biosynthesis; L-arginine biosynthesis [regulation]. In terms of biological role, regulates arginine biosynthesis genes. The protein is Arginine repressor of Caldicellulosiruptor bescii (strain ATCC BAA-1888 / DSM 6725 / KCTC 15123 / Z-1320) (Anaerocellum thermophilum).